A 454-amino-acid chain; its full sequence is NADH-quinone oxidoreductase subunit H (454 aa).

A run of 9 helical transmembrane segments spans residues 18 to 38, 88 to 108, 131 to 151, 172 to 192, 206 to 226, 256 to 276, 296 to 316, 328 to 348, and 360 to 380; these read WWLV…TVLF, VVYV…IAVI, LPIA…GIVL, MISY…YSGS, WYIV…VGET, FMLA…TLFL, WWPM…FIWL, LMKL…MLVA, and FADI…LSFV. Residues 395-454 form a disordered region; sequence AEEPAAFDPMAGGFPVPPLPGQTLPPVPRRRPRRDRELIVSGGPDTASDGPANGKEASDG. Positions 409–421 are enriched in pro residues; the sequence is PVPPLPGQTLPPV.

This sequence belongs to the complex I subunit 1 family. NDH-1 is composed of 14 different subunits. Subunits NuoA, H, J, K, L, M, N constitute the membrane sector of the complex.

The protein localises to the cell membrane. The catalysed reaction is a quinone + NADH + 5 H(+)(in) = a quinol + NAD(+) + 4 H(+)(out). In terms of biological role, NDH-1 shuttles electrons from NADH, via FMN and iron-sulfur (Fe-S) centers, to quinones in the respiratory chain. The immediate electron acceptor for the enzyme in this species is believed to be ubiquinone. Couples the redox reaction to proton translocation (for every two electrons transferred, four hydrogen ions are translocated across the cytoplasmic membrane), and thus conserves the redox energy in a proton gradient. This subunit may bind ubiquinone. This chain is NADH-quinone oxidoreductase subunit H, found in Streptomyces avermitilis (strain ATCC 31267 / DSM 46492 / JCM 5070 / NBRC 14893 / NCIMB 12804 / NRRL 8165 / MA-4680).